The primary structure comprises 462 residues: Chitinase 1 (462 aa).

A signal peptide spans 1-17 (MILNLIILLAISIVASA). Residues 18 to 291 (SNIAAYWGQN…NQLHQALSGS (274 aa)) form the GH18 domain. Asn-57 is a glycosylation site (N-linked (GlcNAc...) asparagine). The Proton donor role is filled by Glu-147.

This sequence belongs to the glycosyl hydrolase 18 family. Chitinase class V subfamily.

The protein localises to the secreted. The catalysed reaction is Random endo-hydrolysis of N-acetyl-beta-D-glucosaminide (1-&gt;4)-beta-linkages in chitin and chitodextrins.. In terms of biological role, chitinase involved in the remodeling of chitin in the fungal cell wall. Plays a role in cell separation. The sequence is that of Chitinase 1 (CHT1) from Candida albicans (strain SC5314 / ATCC MYA-2876) (Yeast).